A 665-amino-acid polypeptide reads, in one-letter code: Adenylate cyclase 1 (665 aa).

The disordered stretch occupies residues 1-25; the sequence is MLQRSESGFKDIESMQDSNADKPSR. Positions 7-24 are enriched in basic and acidic residues; it reads SGFKDIESMQDSNADKPS. The next 2 helical transmembrane spans lie at 33-53 and 373-393; these read SLLG…LVGL and AVSG…AHLI. Positions 394–444 constitute an HAMP domain; sequence TKSLNQLTDSANRLQDLDFATPIDVSSHVAEISTLNGAMNRARDAIFTFAL. Positions 471-603 constitute a Guanylate cyclase domain; the sequence is TAMFTDIYDF…DTVNVASRLE (133 aa). 2 residues coordinate Mg(2+): D476 and D520.

The protein belongs to the adenylyl cyclase class-3 family. Mg(2+) is required as a cofactor.

The protein resides in the cell membrane. It carries out the reaction ATP = 3',5'-cyclic AMP + diphosphate. Its function is as follows. Plays essential roles in regulation of cellular metabolism by catalyzing the synthesis of a second messenger, cAMP. The sequence is that of Adenylate cyclase 1 (cya1) from Rhizobium meliloti (strain 1021) (Ensifer meliloti).